The following is a 282-amino-acid chain: Heat stress transcription factor A-7b (282 aa).

Low complexity-rich tracts occupy residues 1 to 11 and 120 to 134; these read MDPSSSSRARS and SSSS…QSQP. Disordered stretches follow at residues 1 to 24 and 117 to 139; these read MDPS…LQEA and RRTS…AHDP. A DNA-binding region spans residues 26 to 120; that stretch reads PSPFLTKTFE…LLKSIKRRTS (95 aa). Positions 137 to 196 are hydrophobic repeat HR-A/B; that stretch reads HDPGVELPQLREERHVLMMEISTLRQEEQRARGYVQAMEQRINGAEKKQRHMMSFLRRAV. Positions 208–212 match the Nuclear localization signal motif; the sequence is QKRDR. Positions 232–240 match the Nuclear export signal motif; the sequence is LSELEALAL. The short motif at 259–268 is the AHA element; it reads DGFWEELLMN.

It belongs to the HSF family. Class A subfamily. As to quaternary structure, homotrimer. Exhibits temperature-dependent phosphorylation.

Its subcellular location is the cytoplasm. It is found in the nucleus. Its function is as follows. Transcriptional activator that specifically binds DNA sequence 5'-AGAAnnTTCT-3' known as heat shock promoter elements (HSE). This Arabidopsis thaliana (Mouse-ear cress) protein is Heat stress transcription factor A-7b (HSFA7B).